The sequence spans 34 residues: Turripeptide OL127 (34 aa).

In terms of processing, contains 4 disulfide bonds. As to expression, expressed by the venom duct.

Its subcellular location is the secreted. Functionally, acts as a neurotoxin by inhibiting an ion channel. In Iotyrris olangoensis (Sea snail), this protein is Turripeptide OL127.